Here is a 1344-residue protein sequence, read N- to C-terminus: Period circadian protein homolog 2 (1344 aa).

Disordered stretches follow at residues Met-1–Gln-21 and Glu-42–Asp-112. Residues Tyr-10–Gln-21 are compositionally biased toward polar residues. Residues Ser-78–Asn-89 show a composition bias toward low complexity. The span at His-99–Lys-111 shows a compositional bias: basic and acidic residues. The Nuclear export signal 1 motif lies at Leu-161–Ala-170. Residues Ile-231 to Leu-298 enclose the PAS 1 domain. An LXXLL motif is present at residues Leu-358–Leu-362. The 67-residue stretch at Tyr-371–Gln-437 folds into the PAS 2 domain. In terms of domain architecture, PAC spans Tyr-445–Pro-488. Residues Ile-512–Leu-521 carry the Nuclear export signal 2 motif. 5 disordered regions span residues Gly-531–Asp-609, Ala-661–Gln-686, Leu-823–Ser-894, Thr-1038–Gln-1065, and Thr-1107–Gln-1126. Positions Ser-549–Asp-559 are enriched in low complexity. Composition is skewed to basic and acidic residues over residues Asp-560 to Lys-573 and Thr-583 to Ala-597. Positions Pro-667–Ala-684 are enriched in polar residues. Residues Asp-825–Gly-836 are compositionally biased toward basic and acidic residues. A Nuclear localization signal motif is present at residues Lys-851–Gln-865. A compositionally biased stretch (basic residues) spans Lys-852–Ile-862. Composition is skewed to polar residues over residues Gln-865 to Thr-875, Gly-885 to Ser-894, and Ser-1045 to Ala-1059. The short motif at Leu-1138–Leu-1142 is the LXXLL element. Positions Gly-1149–Gly-1172 are enriched in low complexity. A disordered region spans residues Gly-1149–Ser-1197. Residues Gly-1177–Ser-1197 are compositionally biased toward polar residues. The tract at residues Ser-1244–Thr-1344 is CRY binding domain.

As to quaternary structure, component of the circadian clock oscillator which includes the CRY proteins, CLOCK or NPAS2, BMAL1 or BMAL2, CSNK1E, and the PER proteins. Interacts directly with PER3, and through a C-terminal domain, with CRY1 and CRY2.

The protein resides in the nucleus. It localises to the cytoplasm. In terms of biological role, transcriptional repressor which forms a core component of the circadian clock. The circadian clock, an internal time-keeping system, regulates various physiological processes through the generation of approximately 24 hour circadian rhythms in gene expression, which are translated into rhythms in metabolism and behavior. It is derived from the Latin roots 'circa' (about) and 'diem' (day) and acts as an important regulator of a wide array of physiological functions including metabolism, sleep, body temperature, blood pressure, endocrine, immune, cardiovascular, and renal function. Consists of two major components: the central clock, residing in the suprachiasmatic nucleus (SCN) of the brain, and the peripheral clocks that are present in nearly every tissue and organ system. Both the central and peripheral clocks can be reset by environmental cues, also known as Zeitgebers (German for 'timegivers'). The predominant Zeitgeber for the central clock is light, which is sensed by retina and signals directly to the SCN. The central clock entrains the peripheral clocks through neuronal and hormonal signals, body temperature and feeding-related cues, aligning all clocks with the external light/dark cycle. Circadian rhythms allow an organism to achieve temporal homeostasis with its environment at the molecular level by regulating gene expression to create a peak of protein expression once every 24 hours to control when a particular physiological process is most active with respect to the solar day. Transcription and translation of core clock components (CLOCK, NPAS2, BMAL1, BMAL2, PER1, PER2, PER3, CRY1 and CRY2) plays a critical role in rhythm generation, whereas delays imposed by post-translational modifications (PTMs) are important for determining the period (tau) of the rhythms (tau refers to the period of a rhythm and is the length, in time, of one complete cycle). A diurnal rhythm is synchronized with the day/night cycle, while the ultradian and infradian rhythms have a period shorter and longer than 24 hours, respectively. Disruptions in the circadian rhythms contribute to the pathology of cardiovascular diseases, cancer, metabolic syndrome and aging. A transcription/translation feedback loop (TTFL) forms the core of the molecular circadian clock mechanism. Transcription factors, CLOCK or NPAS2 and BMAL1 or BMAL2, form the positive limb of the feedback loop, act in the form of a heterodimer and activate the transcription of core clock genes and clock-controlled genes (involved in key metabolic processes), harboring E-box elements (5'-CACGTG-3') within their promoters. The core clock genes: PER1/2/3 and CRY1/2 which are transcriptional repressors form the negative limb of the feedback loop and interact with the CLOCK|NPAS2-BMAL1|BMAL2 heterodimer inhibiting its activity and thereby negatively regulating their own expression. This heterodimer also activates nuclear receptors NR1D1/2 and RORA/B/G, which form a second feedback loop and which activate and repress BMAL1 transcription, respectively. PER1 and PER2 proteins transport CRY1 and CRY2 into the nucleus with appropriate circadian timing, but also contribute directly to repression of clock-controlled target genes through interaction with several classes of RNA-binding proteins, helicases and others transcriptional repressors. PER appears to regulate circadian control of transcription by at least three different modes. First, interacts directly with the CLOCK-BMAL1 at the tail end of the nascent transcript peak to recruit complexes containing the SIN3-HDAC that remodel chromatin to repress transcription. Second, brings H3K9 methyltransferases such as SUV39H1 and SUV39H2 to the E-box elements of the circadian target genes, like PER2 itself or PER1. The recruitment of each repressive modifier to the DNA seems to be very precisely temporally orchestrated by the large PER complex, the deacetylases acting before than the methyltransferases. Additionally, large PER complexes are also recruited to the target genes 3' termination site through interactions with RNA-binding proteins and helicases that may play a role in transcription termination to regulate transcription independently of CLOCK-BMAL1 interactions. The chain is Period circadian protein homolog 2 (PER2) from Gallus gallus (Chicken).